We begin with the raw amino-acid sequence, 481 residues long: Protein DETOXIFICATION 12 (481 aa).

12 helical membrane passes run 38 to 58 (LIFF…LQIV), 76 to 96 (LASS…SCAL), 117 to 137 (YTAM…WFNM), 154 to 174 (AGKY…LQPL), 187 to 207 (LLIT…FLVY), 214 to 234 (LGGA…LGSF), 267 to 287 (AAMI…SGLL), 296 to 316 (VLSV…AIAA), 336 to 356 (IVVY…SMSL), 380 to 400 (MAPL…LSGI), 415 to 435 (LGAF…WIHL), and 438 to 458 (VGLW…LALV).

Belongs to the multi antimicrobial extrusion (MATE) (TC 2.A.66.1) family.

Its subcellular location is the membrane. The chain is Protein DETOXIFICATION 12 from Arabidopsis thaliana (Mouse-ear cress).